Here is a 1976-residue protein sequence, read N- to C-terminus: MSHEIVPVDPIDVPSTSYSRPILGPREDSPERATEFTRSLTFREHVSSEPFDSERLPATLASEIQRFLRIANLVESEEPRIAYLCRFHAFEIAHHMDRNSTGRGVRQFKTSLLQRLELDEEFTVRRRKEKSDVRELKRVYHAYKEYIIRHGAAFNLDNSQREKLINARRIASVLYEVLKTVTSGAGPQAIADRESIRAKSEFYVPYNILPLDKGGVHQAIMHLPEIKAAVAIVRNTRGLPPPEEFQRHQPFLDLFEFLQYAFGFQNGNVANQREHLILLLSNTIIRQPQKQSSAPKSGDEAVDALMKKFFKNYTNWCKFLGRKNNIRLPYVKQEALQYKTLYIGLYLLIWGEASNLRFMPECLCYIFHHMAYELHGVLTGAVSMITGEKVAPAYGGGHESFLADVVTPIYMVVQKEAEKNKNGTADHSMWRNYDDLNEFFWSLECFEIGWPMRPEHDFFCVESSETSKPGRWRGMLRFRKQTKKTDEEIEDDEELGVLSEEQPKPTSRWLGKTNFVETRSFWQIFRSFDRMWSFFVLSLQALIIMACHDVGSPLQVFNANIFEDVMSIFITSAILKLIKGILDIIFKWKARNTMPINEKKKRLVKLGFAAMWTIILPVLYSHSRRKYICYFTNYKTWLGEWCFSPYMVAVTIYLTGSAIELVLFFVPAISKYIETSNHGIFKTLSWWGQPRLYVGRGMQETQVSQFKYTFFWILVLLTKFAFSYAFEIKPLIEPTRLIMKVGVRNYEWHEIFPEVKSNAAAIVAVWAPIMVVYFMDTQIWYSVYCTIFGGLYGVLHHLGEIRTLGMLRGRFHTLPSAFNASLIPHSTKDEKRRKQRGFFPFNLGRGSDGQKNSMAKFVLVWNQVINSFRTEDLISNKELDLMTMPLSSEVLSGIIRWPIFLLANKFSTALSIAKDFVGKDEVLYRRIRKDEYMYYAVKECYESLKYILQILVVGDLEKKIISGIINEIEESIRQSSLLEEFKMAELPALHDKCIELVQLLVEGSAEQLQVEKSEELHGKLVKALQDIFELVTNDMMVHGDRILDLLQSREGSGEDTGIFMRVIEPQLFESYGEWRCIHFPLPDSASLSEQIQRFLLLLTVKDSAMDIPENLDARRRLSFFATSLFMDMPDAPKVRNMMSFSVLTPHYQEDINYSTNELHSTKSSVSIIFYMQKIFPDEWKNFLERMGCDNLDALKKEGKEEELRNWASFRGQTLSRTVRGMMYCREALKLQAFLDMADDEDILEGYKDVERSNRPLAAQLDALADMKFTYVVSCQMFGAQKSSGDPHAQDILDLMIKYPSLRVAYVEEREEIVLDVPKKVYYSILVKAVNGFDQEIYRVKLPGPPNIGEGKPENQNHAIVFTRGEALQTIDMNQDHYLEEAFKMRNLLQEFLRNRGRRPPTILGLREHIFTGSVSSLAWFMSYQETSFVTIGQRLLANPLRVRFHYGHPDVFDRIFHITRGGISKSSRTINLSEDVFAGYNTTLRRGCITYNEYLQVGKGRDVGLNQISKFEAKVANGNSEQTISRDIYRLGQRFDFFRMLSCYFTTIGFYFSSLISVIGIYIYLYGQLYLVLSGLQKTLILEAKVKNIKSLETALASQSFIQLGLLTGLPMVMEIGLEKGFLIAFQDFILMQLQLAAFFFTFSLGTKTHYFGRTILHGGAKYRPTGRKVVVFHANFSENYRLYSRSHFIKGFELMILLVVYELFKHTSQSNMAYSFITFSVWFMSFTWLCAPFLFNPSGFTWEIIVGDWRDWNRWIKEQGGIGIQQDKSWQSWWNDEQAHLRGSGVGARCLEIILSLRFFVYQYGLVYHLDITQSNTNIIVYALSWVVILATFFTVKAVDLGRQLFSTRKHLVFRFFKVFVFVSILTIIITLANICHLSVKDLLVSCLAFLPTGWGLILIAQAVRPKIEGTSLWEFTQVLARAYDYGMGVVLFAPMAILAWLPIISAFQTRFLFNEAFNRRLQIQPILAGKKKNR.

Residues 1-530 (MSHEIVPVDP…FWQIFRSFDR (530 aa)) are Cytoplasmic-facing. The helical transmembrane segment at 531 to 551 (MWSFFVLSLQALIIMACHDVG) threads the bilayer. Over 552–565 (SPLQVFNANIFEDV) the chain is Extracellular. The helical transmembrane segment at 566–586 (MSIFITSAILKLIKGILDIIF) threads the bilayer. At 587–602 (KWKARNTMPINEKKKR) the chain is on the cytoplasmic side. Residues 603–623 (LVKLGFAAMWTIILPVLYSHS) traverse the membrane as a helical segment. The Extracellular portion of the chain corresponds to 624-648 (RRKYICYFTNYKTWLGEWCFSPYMV). A helical transmembrane segment spans residues 649-669 (AVTIYLTGSAIELVLFFVPAI). At 670–707 (SKYIETSNHGIFKTLSWWGQPRLYVGRGMQETQVSQFK) the chain is on the cytoplasmic side. Residues 708 to 728 (YTFFWILVLLTKFAFSYAFEI) traverse the membrane as a helical segment. Over 729-759 (KPLIEPTRLIMKVGVRNYEWHEIFPEVKSNA) the chain is Extracellular. Residues 760-780 (AAIVAVWAPIMVVYFMDTQIW) traverse the membrane as a helical segment. Residues 781 to 1544 (YSVYCTIFGG…FDFFRMLSCY (764 aa)) are Cytoplasmic-facing. A helical transmembrane segment spans residues 1545–1565 (FTTIGFYFSSLISVIGIYIYL). The Extracellular portion of the chain corresponds to 1566 to 1595 (YGQLYLVLSGLQKTLILEAKVKNIKSLETA). The helical transmembrane segment at 1596-1616 (LASQSFIQLGLLTGLPMVMEI) threads the bilayer. At 1617–1620 (GLEK) the chain is on the cytoplasmic side. A helical membrane pass occupies residues 1621–1641 (GFLIAFQDFILMQLQLAAFFF). Over 1642 to 1688 (TFSLGTKTHYFGRTILHGGAKYRPTGRKVVVFHANFSENYRLYSRSH) the chain is Extracellular. An N-linked (GlcNAc...) asparagine glycan is attached at N1676. A helical membrane pass occupies residues 1689 to 1709 (FIKGFELMILLVVYELFKHTS). Residues 1710-1715 (QSNMAY) lie on the Cytoplasmic side of the membrane. The chain crosses the membrane as a helical span at residues 1716-1736 (SFITFSVWFMSFTWLCAPFLF). Over 1737-1790 (NPSGFTWEIIVGDWRDWNRWIKEQGGIGIQQDKSWQSWWNDEQAHLRGSGVGAR) the chain is Extracellular. Residues 1791 to 1811 (CLEIILSLRFFVYQYGLVYHL) form a helical membrane-spanning segment. Over 1812 to 1819 (DITQSNTN) the chain is Cytoplasmic. A helical membrane pass occupies residues 1820-1840 (IIVYALSWVVILATFFTVKAV). Residues 1841–1856 (DLGRQLFSTRKHLVFR) are Extracellular-facing. Residues 1857 to 1877 (FFKVFVFVSILTIIITLANIC) traverse the membrane as a helical segment. Residues 1878–1884 (HLSVKDL) lie on the Cytoplasmic side of the membrane. The helical transmembrane segment at 1885 to 1905 (LVSCLAFLPTGWGLILIAQAV) threads the bilayer. At 1906 to 1928 (RPKIEGTSLWEFTQVLARAYDYG) the chain is on the extracellular side. The helical transmembrane segment at 1929-1949 (MGVVLFAPMAILAWLPIISAF) threads the bilayer. Topologically, residues 1950 to 1976 (QTRFLFNEAFNRRLQIQPILAGKKKNR) are cytoplasmic.

The protein belongs to the glycosyltransferase 48 family.

It localises to the cell membrane. It catalyses the reaction [(1-&gt;3)-beta-D-glucosyl](n) + UDP-alpha-D-glucose = [(1-&gt;3)-beta-D-glucosyl](n+1) + UDP + H(+). Its function is as follows. Involved in callose synthesis at the forming cell plate during cytokinesis. During plant growth and development, callose is found as a transitory component of the cell plate in dividing cells, is a major component of pollen mother cell walls and pollen tubes, and is found as a structural component of plasmodesmatal canals. This Arabidopsis thaliana (Mouse-ear cress) protein is Putative callose synthase 8 (CALS8).